The chain runs to 369 residues: Quinolinate synthase (369 aa).

Residues His-47 and Ser-64 each coordinate iminosuccinate. Position 111 (Cys-111) interacts with [4Fe-4S] cluster. Iminosuccinate-binding positions include 142-144 and Ser-163; that span reads YVN. Residue Cys-231 coordinates [4Fe-4S] cluster. Iminosuccinate-binding positions include 257-259 and Thr-274; that span reads HPE. Residue Cys-321 coordinates [4Fe-4S] cluster.

Belongs to the quinolinate synthase family. Type 3 subfamily. [4Fe-4S] cluster serves as cofactor.

Its subcellular location is the cytoplasm. The enzyme catalyses iminosuccinate + dihydroxyacetone phosphate = quinolinate + phosphate + 2 H2O + H(+). It functions in the pathway cofactor biosynthesis; NAD(+) biosynthesis; quinolinate from iminoaspartate: step 1/1. Functionally, catalyzes the condensation of iminoaspartate with dihydroxyacetone phosphate to form quinolinate. The protein is Quinolinate synthase of Bacillus pumilus (strain SAFR-032).